Consider the following 321-residue polypeptide: MSIENSKEAALTAELSLAGAFFYTPECPDIEHLRSLSVANRWLDTDLPISDDLKDVAKLTPAEREFYRFLFAFLSAADDLVNLNLGDLSALFTQKDILHYYIEQESIEVTHSRVYSAIQLMLFGNDAAARARYVASIIGDAAIGRKVAWLQAKVRECGSVAEKYILMILIEGLFFASSFASIAYLRTHNLFVVTCQSNDLISRDEAIHTRASCCIYNNYLGGFEKPEPKRIYELFSEAVNIECEFLLSHAPQYSHLLDIGAIISYVRYSADRLLGEIGLSPLFNAPKPSPSFPLAFMTVEKHTNFFERRSTAYSGTLINDL.

Positions 78, 108, and 111 each coordinate Fe cation. Residue Y115 is part of the active site. Residues 165 to 185 traverse the membrane as a helical segment; sequence ILMILIEGLFFASSFASIAYL. Positions 171, 205, and 208 each coordinate Fe cation.

This sequence belongs to the ribonucleoside diphosphate reductase small chain family. As to quaternary structure, heterotetramer composed of a homodimer of the large subunit (R1) and a homodimer of the small subunit (R2). Larger multisubunit protein complex are also active, composed of (R1)n(R2)n. The cofactor is Fe cation.

It localises to the host membrane. It catalyses the reaction a 2'-deoxyribonucleoside 5'-diphosphate + [thioredoxin]-disulfide + H2O = a ribonucleoside 5'-diphosphate + [thioredoxin]-dithiol. In terms of biological role, ribonucleoside-diphosphate reductase holoenzyme provides the precursors necessary for viral DNA synthesis. Allows virus growth in non-dividing cells, as well as reactivation from latency in infected hosts. Catalyzes the biosynthesis of deoxyribonucleotides from the corresponding ribonucleotides. This is Ribonucleoside-diphosphate reductase small subunit from Equus caballus (Horse).